Reading from the N-terminus, the 540-residue chain is Chaperonin GroEL (540 aa).

ATP contacts are provided by residues 30–33 (TLGP), Lys51, 87–91 (DGTTT), Gly415, 479–481 (NAA), and Asp495.

This sequence belongs to the chaperonin (HSP60) family. As to quaternary structure, forms a cylinder of 14 subunits composed of two heptameric rings stacked back-to-back. Interacts with the co-chaperonin GroES.

The protein resides in the cytoplasm. It catalyses the reaction ATP + H2O + a folded polypeptide = ADP + phosphate + an unfolded polypeptide.. Its function is as follows. Together with its co-chaperonin GroES, plays an essential role in assisting protein folding. The GroEL-GroES system forms a nano-cage that allows encapsulation of the non-native substrate proteins and provides a physical environment optimized to promote and accelerate protein folding. This chain is Chaperonin GroEL, found in Pectobacterium carotovorum subsp. carotovorum (Erwinia carotovora subsp. carotovora).